The primary structure comprises 440 residues: Thymidine phosphorylase (440 aa).

Belongs to the thymidine/pyrimidine-nucleoside phosphorylase family. Homodimer.

The enzyme catalyses thymidine + phosphate = 2-deoxy-alpha-D-ribose 1-phosphate + thymine. It participates in pyrimidine metabolism; dTMP biosynthesis via salvage pathway; dTMP from thymine: step 1/2. The enzymes which catalyze the reversible phosphorolysis of pyrimidine nucleosides are involved in the degradation of these compounds and in their utilization as carbon and energy sources, or in the rescue of pyrimidine bases for nucleotide synthesis. The protein is Thymidine phosphorylase of Erwinia tasmaniensis (strain DSM 17950 / CFBP 7177 / CIP 109463 / NCPPB 4357 / Et1/99).